We begin with the raw amino-acid sequence, 967 residues long: Putative helicase MOV-10 (967 aa).

Residues 85–117 (ADQYRRPRTDTEVSAPAPGQQPSSGPPAPQSRA) form a disordered region. Low complexity predominate over residues 98–107 (SAPAPGQQPS). 516–523 (GPPGTGKT) lines the ATP pocket. The DEAG box signature appears at 638-641 (DECG).

It belongs to the DNA2/NAM7 helicase family. SDE3 subfamily.

Its subcellular location is the cytoplasm. The protein localises to the P-body. The protein resides in the cytoplasmic ribonucleoprotein granule. It is found in the stress granule. It localises to the nucleus. The catalysed reaction is ATP + H2O = ADP + phosphate + H(+). 5' to 3' RNA helicase that is involved in a number of cellular roles ranging from mRNA metabolism and translation, modulation of viral infectivity, inhibition of retrotransposition, or regulation of synaptic transmission. Plays an important role in innate antiviral immunity by promoting type I interferon production. Required for microRNA (miRNA)-mediated gene silencing by the RNA-induced silencing complex (RISC). Required for both miRNA-mediated translational repression and miRNA-mediated cleavage of complementary mRNAs by RISC. In cooperation with FMR1, regulates miRNA-mediated translational repression by AGO2. Restricts retrotransposition of long interspersed element-1 (LINE-1). Required for embryonic viability and for normal central nervous system development and function. May function as a messenger ribonucleoprotein (mRNP) clearance factor. This is Putative helicase MOV-10 (MOV10) from Gallus gallus (Chicken).